Here is a 161-residue protein sequence, read N- to C-terminus: Nucleotide-binding protein Swoo_3646 (161 aa).

Belongs to the YajQ family.

Nucleotide-binding protein. The protein is Nucleotide-binding protein Swoo_3646 of Shewanella woodyi (strain ATCC 51908 / MS32).